We begin with the raw amino-acid sequence, 484 residues long: Protein nucleotidyltransferase YdiU (484 aa).

The ATP site is built by Gly81, Gly83, Arg84, Lys103, Asp115, Gly116, Arg166, and Arg173. Residue Asp244 is the Proton acceptor of the active site. Positions 245 and 254 each coordinate Mg(2+). Residue Asp254 coordinates ATP.

The protein belongs to the SELO family. Mg(2+) serves as cofactor. Requires Mn(2+) as cofactor.

The enzyme catalyses L-seryl-[protein] + ATP = 3-O-(5'-adenylyl)-L-seryl-[protein] + diphosphate. It catalyses the reaction L-threonyl-[protein] + ATP = 3-O-(5'-adenylyl)-L-threonyl-[protein] + diphosphate. It carries out the reaction L-tyrosyl-[protein] + ATP = O-(5'-adenylyl)-L-tyrosyl-[protein] + diphosphate. The catalysed reaction is L-histidyl-[protein] + UTP = N(tele)-(5'-uridylyl)-L-histidyl-[protein] + diphosphate. The enzyme catalyses L-seryl-[protein] + UTP = O-(5'-uridylyl)-L-seryl-[protein] + diphosphate. It catalyses the reaction L-tyrosyl-[protein] + UTP = O-(5'-uridylyl)-L-tyrosyl-[protein] + diphosphate. Its function is as follows. Nucleotidyltransferase involved in the post-translational modification of proteins. It can catalyze the addition of adenosine monophosphate (AMP) or uridine monophosphate (UMP) to a protein, resulting in modifications known as AMPylation and UMPylation. In Shewanella baltica (strain OS185), this protein is Protein nucleotidyltransferase YdiU.